A 33-amino-acid polypeptide reads, in one-letter code: Photosystem II reaction center protein T (33 aa).

Residues 3–23 traverse the membrane as a helical segment; sequence ALVYTFLLVSTLGIIFFAIFF.

Belongs to the PsbT family. As to quaternary structure, PSII is composed of 1 copy each of membrane proteins PsbA, PsbB, PsbC, PsbD, PsbE, PsbF, PsbH, PsbI, PsbJ, PsbK, PsbL, PsbM, PsbT, PsbY, PsbZ, Psb30/Ycf12, at least 3 peripheral proteins of the oxygen-evolving complex and a large number of cofactors. It forms dimeric complexes.

Its subcellular location is the plastid. The protein resides in the chloroplast thylakoid membrane. Found at the monomer-monomer interface of the photosystem II (PS II) dimer, plays a role in assembly and dimerization of PSII. PSII is a light-driven water plastoquinone oxidoreductase, using light energy to abstract electrons from H(2)O, generating a proton gradient subsequently used for ATP formation. The sequence is that of Photosystem II reaction center protein T from Arabidopsis thaliana (Mouse-ear cress).